The chain runs to 294 residues: ATP synthase gamma chain (294 aa).

The protein belongs to the ATPase gamma chain family. F-type ATPases have 2 components, CF(1) - the catalytic core - and CF(0) - the membrane proton channel. CF(1) has five subunits: alpha(3), beta(3), gamma(1), delta(1), epsilon(1). CF(0) has three main subunits: a, b and c.

It localises to the cell inner membrane. Functionally, produces ATP from ADP in the presence of a proton gradient across the membrane. The gamma chain is believed to be important in regulating ATPase activity and the flow of protons through the CF(0) complex. This is ATP synthase gamma chain from Campylobacter jejuni (strain RM1221).